The chain runs to 105 residues: Small ribosomal subunit protein uS10 (105 aa).

The protein belongs to the universal ribosomal protein uS10 family. Part of the 30S ribosomal subunit.

In terms of biological role, involved in the binding of tRNA to the ribosomes. This Rickettsia felis (strain ATCC VR-1525 / URRWXCal2) (Rickettsia azadi) protein is Small ribosomal subunit protein uS10.